Reading from the N-terminus, the 786-residue chain is Phenylalanine--tRNA ligase beta subunit (786 aa).

The tRNA-binding domain occupies 39–150 (LRAPDRVVVG…GELKLGKPLH (112 aa)). Positions 397-474 (YKPATITVDL…RLLGIDTILA (78 aa)) constitute a B5 domain. 4 residues coordinate Mg(2+): D452, D458, E461, and E462. The FDX-ACB domain maps to 693 to 786 (SKFPKLQRDL…LNHRFGAKLR (94 aa)).

This sequence belongs to the phenylalanyl-tRNA synthetase beta subunit family. Type 1 subfamily. In terms of assembly, tetramer of two alpha and two beta subunits. Requires Mg(2+) as cofactor.

Its subcellular location is the cytoplasm. It carries out the reaction tRNA(Phe) + L-phenylalanine + ATP = L-phenylalanyl-tRNA(Phe) + AMP + diphosphate + H(+). This is Phenylalanine--tRNA ligase beta subunit from Wolinella succinogenes (strain ATCC 29543 / DSM 1740 / CCUG 13145 / JCM 31913 / LMG 7466 / NCTC 11488 / FDC 602W) (Vibrio succinogenes).